Here is a 145-residue protein sequence, read N- to C-terminus: UPF0179 protein Msm_0285 (145 aa).

The protein belongs to the UPF0179 family.

The polypeptide is UPF0179 protein Msm_0285 (Methanobrevibacter smithii (strain ATCC 35061 / DSM 861 / OCM 144 / PS)).